A 644-amino-acid chain; its full sequence is Chaperone protein DnaK (644 aa).

Thr199 is subject to Phosphothreonine; by autocatalysis. Residues 602–644 (LYAEQSAQQQGSAGATGGEQPKADKAADDGVVDAEFEEVKDDK) form a disordered region. Low complexity predominate over residues 604–614 (AEQSAQQQGSA). A compositionally biased stretch (acidic residues) spans 631 to 644 (GVVDAEFEEVKDDK).

It belongs to the heat shock protein 70 family.

In terms of biological role, acts as a chaperone. The polypeptide is Chaperone protein DnaK (Teredinibacter turnerae (strain ATCC 39867 / T7901)).